Reading from the N-terminus, the 338-residue chain is D-erythrose-4-phosphate dehydrogenase (338 aa).

11-12 serves as a coordination point for NAD(+); that stretch reads RI. Substrate is bound by residues 153 to 155, arginine 199, 212 to 213, and arginine 235; these read SCT and TK. Cysteine 154 functions as the Nucleophile in the catalytic mechanism. Position 317 (asparagine 317) interacts with NAD(+).

The protein belongs to the glyceraldehyde-3-phosphate dehydrogenase family. Epd subfamily. In terms of assembly, homotetramer.

It localises to the cytoplasm. The catalysed reaction is D-erythrose 4-phosphate + NAD(+) + H2O = 4-phospho-D-erythronate + NADH + 2 H(+). It participates in cofactor biosynthesis; pyridoxine 5'-phosphate biosynthesis; pyridoxine 5'-phosphate from D-erythrose 4-phosphate: step 1/5. Its function is as follows. Catalyzes the NAD-dependent conversion of D-erythrose 4-phosphate to 4-phosphoerythronate. In Shewanella putrefaciens (strain CN-32 / ATCC BAA-453), this protein is D-erythrose-4-phosphate dehydrogenase.